The sequence spans 366 residues: NADH-quinone oxidoreductase subunit D (366 aa).

Belongs to the complex I 49 kDa subunit family. NDH-1 is composed of 14 different subunits. Subunits NuoB, C, D, E, F, and G constitute the peripheral sector of the complex.

The protein resides in the cell membrane. The enzyme catalyses a quinone + NADH + 5 H(+)(in) = a quinol + NAD(+) + 4 H(+)(out). Its function is as follows. NDH-1 shuttles electrons from NADH, via FMN and iron-sulfur (Fe-S) centers, to quinones in the respiratory chain. The immediate electron acceptor for the enzyme in this species is believed to be a menaquinone. Couples the redox reaction to proton translocation (for every two electrons transferred, four hydrogen ions are translocated across the cytoplasmic membrane), and thus conserves the redox energy in a proton gradient. This chain is NADH-quinone oxidoreductase subunit D, found in Bacillus thuringiensis subsp. konkukian (strain 97-27).